The sequence spans 397 residues: Ubiquitin-like modifier-activating enzyme 5 (397 aa).

ATP contacts are provided by Gly76, Asp97, Lys120, Asn143, and Asn177. 2 residues coordinate Zn(2+): Cys219 and Cys222. The active-site Glycyl thioester intermediate is the Cys243. Zn(2+) is bound by residues Cys296 and Cys301. The short motif at 327-339 (IVHEDNDWGIELV) is the UFM1-interacting sequence (UIS) element. The linker stretch occupies residues 340 to 370 (SETTEDELKAASGPVPDLPVGITVAYTIPNK). Positions 382-397 (ESEESLEDLMAKMRNL) match the UFC1-binding sequence (UFC) motif.

It belongs to the ubiquitin-activating E1 family. UBA5 subfamily. As to quaternary structure, homodimer; homodimerization is required for UFM1 activation. Interacts (via UIS motif) with UFM1; binds UFM1 via a trans-binding mechanism in which UFM1 interacts with distinct sites in both subunits of the UBA5 homodimer. Interacts (via C-terminus) with UFC1.

It is found in the cytoplasm. It localises to the nucleus. Its subcellular location is the endoplasmic reticulum membrane. The protein resides in the golgi apparatus. E1-like enzyme which specifically catalyzes the first step in ufmylation. Activates UFM1 by first adenylating its C-terminal glycine residue with ATP, and thereafter linking this residue to the side chain of a cysteine residue in E1, yielding a UFM1-E1 thioester and free AMP. Activates UFM1 via a trans-binding mechanism, in which UFM1 interacts with distinct sites in both subunits of the UBA5 homodimer. Trans-binding also promotes stabilization of the UBA5 homodimer, and enhances ATP-binding. Transfer of UFM1 from UBA5 to the E2-like enzyme UFC1 also takes place using a trans mechanism. Ufmylation plays a key role in various processes, such as ribosome recycling, response to DNA damage, interferon response or reticulophagy (also called ER-phagy). The polypeptide is Ubiquitin-like modifier-activating enzyme 5 (Gallus gallus (Chicken)).